A 211-amino-acid polypeptide reads, in one-letter code: Fucoxanthin-chlorophyll a-c binding protein F, chloroplastic (211 aa).

The N-terminal 33 residues, 1–33 (AIACAAAPGLRGPSAFNGAALSTPAKSSSAMKM), are a transit peptide targeting the chloroplast. Transmembrane regions (helical) follow at residues 75–95 (IAML…PGML), 116–136 (IPPG…LAVM), and 177–197 (GRAA…SNQP).

Belongs to the fucoxanthin chlorophyll protein family. The LHC complex of chromophytic algae is composed of fucoxanthin, chlorophyll A and C bound non-covalently by fucoxanthin chlorophyll proteins (FCPs). The ratio of pigments in this LHC is; fucoxanthin: chlorophyll C: chlorophyll A; (0.6-1): (0.1-0.3): (1).

The protein resides in the plastid. Its subcellular location is the chloroplast thylakoid membrane. Functionally, the light-harvesting complex (LHC) functions as a light receptor, it captures and delivers excitation energy to photosystems with which it is closely associated. Energy is transferred from the carotenoid and chlorophyll C (or B) to chlorophyll A and the photosynthetic reaction centers where it is used to synthesize ATP and reducing power. This Macrocystis pyrifera (Giant kelp) protein is Fucoxanthin-chlorophyll a-c binding protein F, chloroplastic (FCPF).